A 343-amino-acid polypeptide reads, in one-letter code: L-threonine 3-dehydrogenase (343 aa).

A Zn(2+)-binding site is contributed by Cys38. Catalysis depends on charge relay system residues Thr40 and His43. Zn(2+)-binding residues include His63, Glu64, Cys93, Cys96, Cys99, and Cys107. Residues Ile175, Asp195, Arg200, 262–264 (LGI), and 286–287 (IY) each bind NAD(+).

Belongs to the zinc-containing alcohol dehydrogenase family. In terms of assembly, homotetramer. Zn(2+) is required as a cofactor.

It localises to the cytoplasm. The enzyme catalyses L-threonine + NAD(+) = (2S)-2-amino-3-oxobutanoate + NADH + H(+). It participates in amino-acid degradation; L-threonine degradation via oxydo-reductase pathway; glycine from L-threonine: step 1/2. Its function is as follows. Catalyzes the NAD(+)-dependent oxidation of L-threonine to 2-amino-3-ketobutyrate. This chain is L-threonine 3-dehydrogenase, found in Paraburkholderia xenovorans (strain LB400).